The sequence spans 739 residues: Mitochondrial proton/calcium exchanger protein (739 aa).

The N-terminal 115 residues, 1–115 (MASILLRSCR…RGWHSSRPVR (115 aa)), are a transit peptide targeting the mitochondrion. A coiled-coil region spans residues 115-136 (RDDSVVEKSLKSLKDKNKKLEE). Residues 116–208 (DDSVVEKSLK…FLRICADLFR (93 aa)) lie on the Mitochondrial intermembrane side of the membrane. Residue Thr192 is modified to Phosphothreonine; by PINK1. Residues 209 to 229 (LVPFLVFVVVPFMEFLLPVAV) form a helical membrane-spanning segment. Over 230–739 (KLFPNMLPST…AEKEVAEVKS (510 aa)) the chain is Mitochondrial matrix. The region spanning 252 to 537 (KELRVKLELA…TAPVLEGLKE (286 aa)) is the Letm1 RBD domain. Coiled coils occupy residues 462 to 490 (NKAKLEATLQEEAAIQQEHREKELQKRSE) and 537 to 627 (EEEI…SQLE). Residue Lys597 is modified to N6-acetyllysine. In terms of domain architecture, EF-hand spans 663–698 (IPESKLTSLAAALDENKDGKVNIDDLVKVIELVDKE). Positions 676, 678, 680, 682, and 687 each coordinate Ca(2+). The stretch at 708-739 (AEIVATLEKEEKVEEKEKAKEKAEKEVAEVKS) forms a coiled coil. The interval 718–739 (EKVEEKEKAKEKAEKEVAEVKS) is disordered.

The protein belongs to the LETM1 family. Homohexamer. Can form 2 complexes: a major (300 kDa) and a minor complex (500-600 kDa). Interacts with BCS1L. Interacts with GHITM. PINK1-mediated phosphorylation at Thr-192, positively regulates its mitochondrial calcium transport activity.

The protein localises to the mitochondrion inner membrane. It catalyses the reaction Ca(2+)(in) + 2 H(+)(out) = Ca(2+)(out) + 2 H(+)(in). The enzyme catalyses K(+)(in) + H(+)(out) = K(+)(out) + H(+)(in). Inhibited by ruthenium red or its derivative Ru360. Plays an important role in maintenance of mitochondrial morphology and in mediating either calcium or potassium/proton antiport. Mediates proton-dependent calcium efflux from mitochondrion. Also functions as an electroneutral mitochondrial proton/potassium exchanger. Crucial for the maintenance of mitochondrial tubular networks and for the assembly of the supercomplexes of the respiratory chain. Required for the maintenance of the tubular shape and cristae organization. In Homo sapiens (Human), this protein is Mitochondrial proton/calcium exchanger protein.